We begin with the raw amino-acid sequence, 111 residues long: Ig kappa chain V-III region PC 6684 (111 aa).

The tract at residues 1 to 23 (DIVLTQSPASLAVSLGQRATISC) is framework-1. Cysteine 23 and cysteine 92 are oxidised to a cystine. A complementarity-determining-1 region spans residues 24 to 38 (RASKSVSTSGYSYMH). The framework-2 stretch occupies residues 39 to 53 (WYQQKPGQPPKLLIY). The interval 54 to 60 (LASNLES) is complementarity-determining-2. Residues 61 to 92 (GVPARFSGSGSGTDFTLNIHPVEEEDAATYYC) are framework-3. A complementarity-determining-3 region spans residues 93 to 101 (QHSRELPRT). Positions 102-111 (FGGGTKLEIK) are framework-4.

This chain is Ig kappa chain V-III region PC 6684, found in Mus musculus (Mouse).